A 79-amino-acid polypeptide reads, in one-letter code: D-alanyl carrier protein (79 aa).

In terms of domain architecture, Carrier spans 1–76 (MEEQVLSLLE…RVMAYVKKRV (76 aa)). Ser-34 is subject to O-(pantetheine 4'-phosphoryl)serine.

The protein belongs to the DltC family. Post-translationally, 4'-phosphopantetheine is transferred from CoA to a specific serine of apo-DCP.

The protein resides in the cytoplasm. It participates in cell wall biogenesis; lipoteichoic acid biosynthesis. Functionally, carrier protein involved in the D-alanylation of lipoteichoic acid (LTA). The loading of thioester-linked D-alanine onto DltC is catalyzed by D-alanine--D-alanyl carrier protein ligase DltA. The DltC-carried D-alanyl group is further transferred to cell membrane phosphatidylglycerol (PG) by forming an ester bond, probably catalyzed by DltD. D-alanylation of LTA plays an important role in modulating the properties of the cell wall in Gram-positive bacteria, influencing the net charge of the cell wall. In Abiotrophia defectiva (Streptococcus defectivus), this protein is D-alanyl carrier protein.